The chain runs to 210 residues: MSLISNNEERSLRVRYCIAIALSALLISGCTTLRLPNQSTSVYHQQTWAQRYYDLSRISQWNIDGAFSIQQPGKTIIAAYDWQQKGMNYRIRIHSSLDIYSVNISGRPGMVTLWRSPRQHYTASTPEQLMQQQLGWQLPLSNLYYWIRGIPAPGAYQADFDTYTHLIALQQSGWHIRFSQYTTVGSVDLPRTLQLSNGSLAVKIVVKHWQ.

Residues 1 to 29 (MSLISNNEERSLRVRYCIAIALSALLISG) form the signal peptide. A lipid anchor (N-palmitoyl cysteine) is attached at cysteine 30. Cysteine 30 carries S-diacylglycerol cysteine lipidation.

This sequence belongs to the LolB family. In terms of assembly, monomer.

Its subcellular location is the cell outer membrane. Its function is as follows. Plays a critical role in the incorporation of lipoproteins in the outer membrane after they are released by the LolA protein. The sequence is that of Outer-membrane lipoprotein LolB from Coxiella burnetii (strain RSA 493 / Nine Mile phase I).